The primary structure comprises 100 residues: Putative pterin-4-alpha-carbinolamine dehydratase (100 aa).

The protein belongs to the pterin-4-alpha-carbinolamine dehydratase family.

It catalyses the reaction (4aS,6R)-4a-hydroxy-L-erythro-5,6,7,8-tetrahydrobiopterin = (6R)-L-erythro-6,7-dihydrobiopterin + H2O. This chain is Putative pterin-4-alpha-carbinolamine dehydratase, found in Rhodopseudomonas palustris (strain ATCC BAA-98 / CGA009).